A 396-amino-acid chain; its full sequence is Probable sugar efflux transporter (396 aa).

Helical transmembrane passes span 15 to 35 (VVTL…PVGL), 50 to 70 (VGIM…PFML), 81 to 101 (LICL…SWSF), 103 to 123 (VLVI…SITA), 136 to 156 (AQAL…GLPL), 170 to 190 (FFAI…LLPL), 209 to 229 (PALM…YTAY), 246 to 266 (FATA…VIFG), 275 to 295 (TLVS…LPAA), 299 to 319 (IHLG…GLGM), 333 to 353 (VAMA…ALVG), and 364 to 384 (MIGY…IIIF).

This sequence belongs to the major facilitator superfamily. SotB (TC 2.A.1.2) family.

Its subcellular location is the cell inner membrane. Its function is as follows. Involved in the efflux of sugars. The physiological role may be the reduction of the intracellular concentration of toxic sugars or sugar metabolites. The chain is Probable sugar efflux transporter from Escherichia coli (strain SMS-3-5 / SECEC).